The following is a 343-amino-acid chain: Fructose-bisphosphate aldolase (343 aa).

Ser-53 is a binding site for D-glyceraldehyde 3-phosphate. Asp-95 acts as the Proton donor in catalysis. Zn(2+) contacts are provided by His-96, Asp-131, Glu-161, and His-212. Gly-213 lines the dihydroxyacetone phosphate pocket. His-252 provides a ligand contact to Zn(2+). Residues 253–255 and 274–277 each bind dihydroxyacetone phosphate; these read GGS and NIDT.

This sequence belongs to the class II fructose-bisphosphate aldolase family. The cofactor is Zn(2+).

It carries out the reaction beta-D-fructose 1,6-bisphosphate = D-glyceraldehyde 3-phosphate + dihydroxyacetone phosphate. Its pathway is carbohydrate degradation; glycolysis; D-glyceraldehyde 3-phosphate and glycerone phosphate from D-glucose: step 4/4. In terms of biological role, catalyzes the aldol condensation of dihydroxyacetone phosphate (DHAP or glycerone-phosphate) with glyceraldehyde 3-phosphate (G3P) to form fructose 1,6-bisphosphate (FBP) in gluconeogenesis and the reverse reaction in glycolysis. The sequence is that of Fructose-bisphosphate aldolase (fba) from Streptomyces coelicolor (strain ATCC BAA-471 / A3(2) / M145).